Consider the following 931-residue polypeptide: Translation initiation factor IF-2 (931 aa).

The interval 32 to 310 (KSASSTVEPP…SSKARKNRLA (279 aa)) is disordered. Residues 50–59 (FASSGQGNAS) show a composition bias toward polar residues. Residues 82–96 (PAAPSAPKPAAPAAP) are compositionally biased toward pro residues. Low complexity predominate over residues 156-168 (GNAPQGGNNANGA). Composition is skewed to gly residues over residues 217-238 (RPGQ…GGAK), 248-271 (GQGG…GFQG), and 281-298 (ARGG…GRQG). Residues 424–596 (PRPPVVTVMG…VLLTADAELD (173 aa)) form the tr-type G domain. The interval 433 to 440 (GHVDHGKT) is G1. 433 to 440 (GHVDHGKT) contributes to the GTP binding site. The interval 458 to 462 (GITQR) is G2. The interval 483 to 486 (DTPG) is G3. Residues 483-487 (DTPGH) and 537-540 (NKID) contribute to the GTP site. The interval 537–540 (NKID) is G4. A G5 region spans residues 573 to 575 (SAK).

Belongs to the TRAFAC class translation factor GTPase superfamily. Classic translation factor GTPase family. IF-2 subfamily.

The protein resides in the cytoplasm. One of the essential components for the initiation of protein synthesis. Protects formylmethionyl-tRNA from spontaneous hydrolysis and promotes its binding to the 30S ribosomal subunits. Also involved in the hydrolysis of GTP during the formation of the 70S ribosomal complex. The sequence is that of Translation initiation factor IF-2 from Bifidobacterium adolescentis (strain ATCC 15703 / DSM 20083 / NCTC 11814 / E194a).